Here is a 468-residue protein sequence, read N- to C-terminus: Probable Xaa-Pro aminopeptidase PEPP (468 aa).

Mn(2+)-binding residues include Asp264, Asp275, Glu398, and Glu438.

This sequence belongs to the peptidase M24B family. Mn(2+) serves as cofactor.

The catalysed reaction is Release of any N-terminal amino acid, including proline, that is linked to proline, even from a dipeptide or tripeptide.. Functionally, catalyzes the removal of a penultimate prolyl residue from the N-termini of peptides. This Ajellomyces dermatitidis (strain ER-3 / ATCC MYA-2586) (Blastomyces dermatitidis) protein is Probable Xaa-Pro aminopeptidase PEPP (PEPP).